Reading from the N-terminus, the 238-residue chain is Ribonuclease PH (238 aa).

Phosphate is bound by residues Arg-86 and 124–126 (GTR).

Belongs to the RNase PH family. As to quaternary structure, homohexameric ring arranged as a trimer of dimers.

The enzyme catalyses tRNA(n+1) + phosphate = tRNA(n) + a ribonucleoside 5'-diphosphate. Functionally, phosphorolytic 3'-5' exoribonuclease that plays an important role in tRNA 3'-end maturation. Removes nucleotide residues following the 3'-CCA terminus of tRNAs; can also add nucleotides to the ends of RNA molecules by using nucleoside diphosphates as substrates, but this may not be physiologically important. Probably plays a role in initiation of 16S rRNA degradation (leading to ribosome degradation) during starvation. The polypeptide is Ribonuclease PH (Chromobacterium violaceum (strain ATCC 12472 / DSM 30191 / JCM 1249 / CCUG 213 / NBRC 12614 / NCIMB 9131 / NCTC 9757 / MK)).